A 201-amino-acid chain; its full sequence is Peptidyl-tRNA hydrolase (201 aa).

TRNA is bound at residue Tyr17. The Proton acceptor role is filled by His22. Residues Tyr68, Asn70, and Asn116 each coordinate tRNA.

The protein belongs to the PTH family. In terms of assembly, monomer.

It is found in the cytoplasm. It carries out the reaction an N-acyl-L-alpha-aminoacyl-tRNA + H2O = an N-acyl-L-amino acid + a tRNA + H(+). Functionally, hydrolyzes ribosome-free peptidyl-tRNAs (with 1 or more amino acids incorporated), which drop off the ribosome during protein synthesis, or as a result of ribosome stalling. Its function is as follows. Catalyzes the release of premature peptidyl moieties from peptidyl-tRNA molecules trapped in stalled 50S ribosomal subunits, and thus maintains levels of free tRNAs and 50S ribosomes. In Lawsonia intracellularis (strain PHE/MN1-00), this protein is Peptidyl-tRNA hydrolase.